A 48-amino-acid polypeptide reads, in one-letter code: Large ribosomal subunit protein bL34 (48 aa).

The protein belongs to the bacterial ribosomal protein bL34 family.

This chain is Large ribosomal subunit protein bL34 (rpmH), found in Mycoplasma genitalium (strain ATCC 33530 / DSM 19775 / NCTC 10195 / G37) (Mycoplasmoides genitalium).